Consider the following 235-residue polypeptide: Pyridoxine/pyridoxamine 5'-phosphate oxidase (235 aa).

Substrate-binding positions include R30–Y33 and K88. Residues R83–K88, Y98–T99, R104, K105, and Q127 contribute to the FMN site. Residues Y145, R149, and S153 each contribute to the substrate site. Residues Q162–S163 and W207 each bind FMN. R213–H215 contributes to the substrate binding site. R217 serves as a coordination point for FMN.

It belongs to the pyridoxamine 5'-phosphate oxidase family. As to quaternary structure, homodimer. It depends on FMN as a cofactor.

It catalyses the reaction pyridoxamine 5'-phosphate + O2 + H2O = pyridoxal 5'-phosphate + H2O2 + NH4(+). The enzyme catalyses pyridoxine 5'-phosphate + O2 = pyridoxal 5'-phosphate + H2O2. It participates in cofactor metabolism; pyridoxal 5'-phosphate salvage; pyridoxal 5'-phosphate from pyridoxamine 5'-phosphate: step 1/1. It functions in the pathway cofactor metabolism; pyridoxal 5'-phosphate salvage; pyridoxal 5'-phosphate from pyridoxine 5'-phosphate: step 1/1. Catalyzes the oxidation of either pyridoxine 5'-phosphate (PNP) or pyridoxamine 5'-phosphate (PMP) into pyridoxal 5'-phosphate (PLP). The sequence is that of Pyridoxine/pyridoxamine 5'-phosphate oxidase from Bacteroides fragilis (strain YCH46).